The chain runs to 390 residues: Lipid-A-disaccharide synthase (390 aa).

This sequence belongs to the LpxB family.

It carries out the reaction a lipid X + a UDP-2-N,3-O-bis[(3R)-3-hydroxyacyl]-alpha-D-glucosamine = a lipid A disaccharide + UDP + H(+). It functions in the pathway bacterial outer membrane biogenesis; LPS lipid A biosynthesis. Condensation of UDP-2,3-diacylglucosamine and 2,3-diacylglucosamine-1-phosphate to form lipid A disaccharide, a precursor of lipid A, a phosphorylated glycolipid that anchors the lipopolysaccharide to the outer membrane of the cell. The protein is Lipid-A-disaccharide synthase of Paramagnetospirillum magneticum (strain ATCC 700264 / AMB-1) (Magnetospirillum magneticum).